The sequence spans 313 residues: Beta-lactamase FAR-1 (313 aa).

The first 28 residues, 1–28 (MPGVDISFLKKSGRRTMAAAAVIALLGG), serve as a signal peptide directing secretion. Cys-29 is lipidated: N-palmitoyl cysteine. Cys-29 is lipidated: S-diacylglycerol cysteine. Ser-94 (acyl-ester intermediate) is an active-site residue. Ser-154 serves as a coordination point for substrate. Glu-190 serves as the catalytic Proton acceptor. 258–260 (KTG) is a binding site for substrate.

Belongs to the class-A beta-lactamase family.

It localises to the cell membrane. It catalyses the reaction a beta-lactam + H2O = a substituted beta-amino acid. Inhibited by clavulanic acid, and at a low level by tazobactam and sulbactam. Confers high levels of resistance to amoxicillin, benzylpenicillin, piperacillin, ticarcillin and cephalothin. Also hydrolyzes aztreonam at a low level. Not active against ceftazidime, cefotaxime and imipenem. The polypeptide is Beta-lactamase FAR-1 (bla) (Nocardia farcinica (strain IFM 10152)).